A 367-amino-acid chain; its full sequence is Peptide chain release factor 1 (367 aa).

Gln-238 carries the post-translational modification N5-methylglutamine.

Belongs to the prokaryotic/mitochondrial release factor family. In terms of processing, methylated by PrmC. Methylation increases the termination efficiency of RF1.

It is found in the cytoplasm. Peptide chain release factor 1 directs the termination of translation in response to the peptide chain termination codons UAG and UAA. This chain is Peptide chain release factor 1, found in Dictyoglomus turgidum (strain DSM 6724 / Z-1310).